A 432-amino-acid chain; its full sequence is Pachytene checkpoint protein 2 homolog (432 aa).

Residue 179-186 (GPPGTGKT) coordinates ATP.

This sequence belongs to the AAA ATPase family. PCH2 subfamily.

Functionally, plays a key role in chromosome recombination and chromosome structure development during meiosis. Required at early steps in meiotic recombination that leads to non-crossovers pathways. Also needed for efficient completion of homologous synapsis by influencing crossover distribution along the chromosomes affecting both crossovers and non-crossovers pathways. This Gallus gallus (Chicken) protein is Pachytene checkpoint protein 2 homolog (TRIP13).